A 214-amino-acid chain; its full sequence is tRNA (guanine-N(7)-)-methyltransferase (214 aa).

Residues E44, E69, D96, and D118 each contribute to the S-adenosyl-L-methionine site. The active site involves D118. A substrate-binding site is contributed by K122. The interaction with RNA stretch occupies residues 124–129; the sequence is RHEKRR. Residues D154 and 192–195 each bind substrate; that span reads TEYE.

Belongs to the class I-like SAM-binding methyltransferase superfamily. TrmB family.

The catalysed reaction is guanosine(46) in tRNA + S-adenosyl-L-methionine = N(7)-methylguanosine(46) in tRNA + S-adenosyl-L-homocysteine. The protein operates within tRNA modification; N(7)-methylguanine-tRNA biosynthesis. In terms of biological role, catalyzes the formation of N(7)-methylguanine at position 46 (m7G46) in tRNA. This chain is tRNA (guanine-N(7)-)-methyltransferase, found in Lactiplantibacillus plantarum (strain ATCC BAA-793 / NCIMB 8826 / WCFS1) (Lactobacillus plantarum).